The chain runs to 421 residues: U-box domain-containing protein 26 (421 aa).

A U-box domain is found at 13 to 87 (QIPYHFRCPI…QEWCVANRSN (75 aa)).

It carries out the reaction S-ubiquitinyl-[E2 ubiquitin-conjugating enzyme]-L-cysteine + [acceptor protein]-L-lysine = [E2 ubiquitin-conjugating enzyme]-L-cysteine + N(6)-ubiquitinyl-[acceptor protein]-L-lysine.. Its pathway is protein modification; protein ubiquitination. Functions as an E3 ubiquitin ligase. The polypeptide is U-box domain-containing protein 26 (PUB26) (Arabidopsis thaliana (Mouse-ear cress)).